A 532-amino-acid polypeptide reads, in one-letter code: Protein DA1 (532 aa).

The interval 26-71 (VYYDNYPTASHDDEPSAADTDADNDEPHHTQEPSTSEDNTSNDQEN) is disordered. A compositionally biased stretch (polar residues) spans 57 to 68 (EPSTSEDNTSND). In terms of domain architecture, UIM 1 spans 69-88 (QENEDIDRAIALSLLEENQE). Lys-95 participates in a covalent cross-link: Glycyl lysine isopeptide (Lys-Gly) (interchain with G-Cter in ubiquitin). Residues 101–120 (DEDEQLARALQESMVVGNSP) enclose the UIM 2 domain. The LIM zinc-binding domain occupies 170–230 (RICAGCNMEI…KACYRERYHP (61 aa)). Residues Lys-221, Lys-348, Lys-376, Lys-381, Lys-391, Lys-474, Lys-475, and Lys-519 each participate in a glycyl lysine isopeptide (Lys-Gly) (interchain with G-Cter in ubiquitin) cross-link.

Interacts with ubiquitin. Interacts (via C-terminus) with DA2. Interacts with BB. Interacts with UBP15. Interacts with TCP14 and TCP15. Ubiquitinated at Lys-95, Lys-221, Lys-348, Lys-376, Lys-381, Lys-391, Lys-474, Lys-475 and Lys-519 by the E3 ubiquitin-protein ligases BB and DA2.

Its function is as follows. Ubiquitin receptor that limits final seed and organ size by restricting the period of cell proliferation. May act maternally to control seed mass. Acts synergistically with DA2 to regulate seed size. Functions synergistically with DA2 to restrict cell proliferation in the maternal integuments of ovules and developing seeds. Functions antagonistically in a common pathway with UBP15 to regulate seed size. Associates physically with UBP15 and modulates the stability of UBP15, which promote cell proliferation in the integuments of ovules and developing seeds. Functions as a peptidase and cleaves the N-terminal sequence of E3 ubiquitin-protein ligases BB and DA2 in a ubiquitin-dependent manner. Cleaves the deubiquitinating enzyme UBP15, which promotes cell proliferation, and the transcription factors TCP15 and TCP22, which promote cell proliferation and repress endoreduplication. Involved in the promotion of leaf senescence, in addition to its function in restricting plant growth. Acts redundantly with DAR1 and DAR2 to regulate endoreduplication during leaf development. Together with DAR1 and DAR2, modulates the protein stability of the transcription factors TCP14 and TCP15, which repress endoreduplication by directly regulating the expression of cell-cycle genes. The polypeptide is Protein DA1 (DA1) (Arabidopsis thaliana (Mouse-ear cress)).